The sequence spans 198 residues: TATA-box-binding protein (198 aa).

Repeat copies occupy residues 14 to 90 and 105 to 181.

It belongs to the TBP family.

Its function is as follows. General factor that plays a role in the activation of archaeal genes transcribed by RNA polymerase. Binds specifically to the TATA box promoter element which lies close to the position of transcription initiation. This chain is TATA-box-binding protein, found in Saccharolobus shibatae (strain ATCC 51178 / DSM 5389 / JCM 8931 / NBRC 15437 / B12) (Sulfolobus shibatae).